Here is a 107-residue protein sequence, read N- to C-terminus: Basic phospholipase A2 sphenotoxin subunit B (107 aa).

Ca(2+)-binding residues include Tyr27, Gly29, and Gly31. 5 disulfides stabilise this stretch: Cys28-Cys44, Cys43-Cys91, Cys50-Cys88, Cys57-Cys81, and Cys75-Cys86. His47 is a catalytic residue. Asp48 lines the Ca(2+) pocket. Asp89 is a catalytic residue.

The protein belongs to the phospholipase A2 family. Group II subfamily. D49 sub-subfamily. Heterodimer of A and B chains; non-covalently linked. The acidic protein (B chain) has phospholipase A2 activity and the A chain weakly inhibits the B chain enzymatic activity but potentiates its lethal potency. As to expression, expressed by the venom gland.

The protein localises to the secreted. The enzyme catalyses a 1,2-diacyl-sn-glycero-3-phosphocholine + H2O = a 1-acyl-sn-glycero-3-phosphocholine + a fatty acid + H(+). Functionally, heterodimer A-B: Sphenotoxin is a potent neurotoxin that possesses phospholipase A2 (PLA2) activity. It consists of a non-covalent association of a basic PLA2 subunit B with a non-enzymatic subunit A. Monomer B: Not found in vivo. In vitro, potent neurotoxin that possesses phospholipase A2 (PLA2) activity and exerts a lethal action by blocking neuromuscular transmission. Induces paralysis of the hind legs and neuromuscular blockade in mouse phrenic nerve-diaphragm preparations. PLA2 catalyzes the calcium-dependent hydrolysis of the 2-acyl groups in 3-sn-phosphoglycerides. This chain is Basic phospholipase A2 sphenotoxin subunit B, found in Ophryacus sphenophrys (Broad-horned pitviper).